Here is a 119-residue protein sequence, read N- to C-terminus: Insulin growth factor-like family member 2 (119 aa).

An N-terminal signal peptide occupies residues 1–25; it reads MVPRIFAPAYVSVCLLLLCPREVIA.

Belongs to the IGFL family. Detected in cerebellum, heart, placenta, spleen, stomach, testis and thymus.

The protein resides in the secreted. Its function is as follows. Potential ligand of the IGFLR1 cell membrane receptor. The sequence is that of Insulin growth factor-like family member 2 (IGFL2) from Homo sapiens (Human).